We begin with the raw amino-acid sequence, 278 residues long: Energy-coupling factor transporter ATP-binding protein EcfA (278 aa).

One can recognise an ABC transporter domain in the interval 4-239 (LETRDLKYSY…SETVRSANLR (236 aa)). 37-44 (GPNGAGKS) contacts ATP.

This sequence belongs to the ABC transporter superfamily. Energy-coupling factor EcfA family. Forms a stable energy-coupling factor (ECF) transporter complex composed of 2 membrane-embedded substrate-binding proteins (S component), 2 ATP-binding proteins (A component) and 2 transmembrane proteins (T component).

The protein resides in the cell membrane. In terms of biological role, ATP-binding (A) component of a common energy-coupling factor (ECF) ABC-transporter complex. Unlike classic ABC transporters this ECF transporter provides the energy necessary to transport a number of different substrates. This Methanococcus maripaludis (strain DSM 14266 / JCM 13030 / NBRC 101832 / S2 / LL) protein is Energy-coupling factor transporter ATP-binding protein EcfA.